Reading from the N-terminus, the 362-residue chain is Probable choline-phosphate cytidylyltransferase (362 aa).

Residues 1–37 (MGEEGIKINDTHKRRIDEVEPSEKEDNVERQTKKYNF) show a composition bias toward basic and acidic residues. The disordered stretch occupies residues 1–79 (MGEEGIKIND…VSPVEEEPRD (79 aa)). CTP is bound by residues 109–117 (VFDLFHIGH) and K147. K147 and W176 together coordinate substrate. CTP is bound by residues 193–194 (HD), Y198, and 221–225 (RTEGV). The segment at 308–362 (KNPLHGSSEPSSPGPTGFLGGINRWMQRRSSSHYDLPRVGNEIAASSSSATEENH) is disordered. Low complexity-rich tracts occupy residues 313-323 (GSSEPSSPGPT) and 351-362 (AASSSSATEENH). Phosphoserine occurs at positions 315 and 319. T323 is subject to Phosphothreonine. Residue S355 is modified to Phosphoserine.

It belongs to the cytidylyltransferase family.

Its subcellular location is the nucleus. It catalyses the reaction phosphocholine + CTP + H(+) = CDP-choline + diphosphate. This is Probable choline-phosphate cytidylyltransferase from Schizosaccharomyces pombe (strain 972 / ATCC 24843) (Fission yeast).